Consider the following 417-residue polypeptide: Gamma-glutamyl phosphate reductase (417 aa).

Belongs to the gamma-glutamyl phosphate reductase family.

It is found in the cytoplasm. It catalyses the reaction L-glutamate 5-semialdehyde + phosphate + NADP(+) = L-glutamyl 5-phosphate + NADPH + H(+). Its pathway is amino-acid biosynthesis; L-proline biosynthesis; L-glutamate 5-semialdehyde from L-glutamate: step 2/2. In terms of biological role, catalyzes the NADPH-dependent reduction of L-glutamate 5-phosphate into L-glutamate 5-semialdehyde and phosphate. The product spontaneously undergoes cyclization to form 1-pyrroline-5-carboxylate. This Shigella boydii serotype 18 (strain CDC 3083-94 / BS512) protein is Gamma-glutamyl phosphate reductase.